The chain runs to 211 residues: Adenylate kinase (211 aa).

Residue 10-15 (GSGKGT) coordinates ATP. The interval 30–59 (STGDLFRENILNSTTLGKEIKKIVEKGELV) is NMP. AMP contacts are provided by residues threonine 31, arginine 36, 57–59 (ELV), 85–88 (GFPR), and glutamine 92. The interval 121–158 (GRRICKSCNNIFNIYTLATKKNGICDVCKGDLYQREDD) is LID. ATP is bound at residue arginine 122. Cysteine 125 and cysteine 128 together coordinate Zn(2+). ATP is bound at residue 131–132 (IF). Zn(2+)-binding residues include cysteine 145 and cysteine 148. Arginine 155 and arginine 166 together coordinate AMP. Valine 194 serves as a coordination point for ATP.

The protein belongs to the adenylate kinase family. As to quaternary structure, monomer.

The protein localises to the cytoplasm. The enzyme catalyses AMP + ATP = 2 ADP. Its pathway is purine metabolism; AMP biosynthesis via salvage pathway; AMP from ADP: step 1/1. Catalyzes the reversible transfer of the terminal phosphate group between ATP and AMP. Plays an important role in cellular energy homeostasis and in adenine nucleotide metabolism. The polypeptide is Adenylate kinase (Borrelia garinii subsp. bavariensis (strain ATCC BAA-2496 / DSM 23469 / PBi) (Borreliella bavariensis)).